The following is a 240-amino-acid chain: 4-hydroxy-tetrahydrodipicolinate reductase (240 aa).

NAD(+) contacts are provided by residues 79 to 81 (ATT) and 103 to 106 (SANM). The active-site Proton donor/acceptor is the histidine 135. Position 136 (histidine 136) interacts with (S)-2,3,4,5-tetrahydrodipicolinate. Lysine 139 acts as the Proton donor in catalysis. 145-146 (GT) is a (S)-2,3,4,5-tetrahydrodipicolinate binding site.

It belongs to the DapB family.

The protein resides in the cytoplasm. The enzyme catalyses (S)-2,3,4,5-tetrahydrodipicolinate + NAD(+) + H2O = (2S,4S)-4-hydroxy-2,3,4,5-tetrahydrodipicolinate + NADH + H(+). It catalyses the reaction (S)-2,3,4,5-tetrahydrodipicolinate + NADP(+) + H2O = (2S,4S)-4-hydroxy-2,3,4,5-tetrahydrodipicolinate + NADPH + H(+). The protein operates within amino-acid biosynthesis; L-lysine biosynthesis via DAP pathway; (S)-tetrahydrodipicolinate from L-aspartate: step 4/4. In terms of biological role, catalyzes the conversion of 4-hydroxy-tetrahydrodipicolinate (HTPA) to tetrahydrodipicolinate. The chain is 4-hydroxy-tetrahydrodipicolinate reductase from Staphylococcus aureus (strain bovine RF122 / ET3-1).